The sequence spans 352 residues: Selenide, water dikinase (352 aa).

The active site involves cysteine 23. Residues lysine 26 and 54-56 (SRD) contribute to the ATP site. Position 57 (aspartate 57) interacts with Mg(2+). Residues aspartate 74, aspartate 97, and 145–147 (GHS) contribute to the ATP site. Aspartate 97 contributes to the Mg(2+) binding site. Aspartate 233 serves as a coordination point for Mg(2+).

This sequence belongs to the selenophosphate synthase 1 family. Class I subfamily. As to quaternary structure, homodimer. Mg(2+) serves as cofactor.

It carries out the reaction hydrogenselenide + ATP + H2O = selenophosphate + AMP + phosphate + 2 H(+). Synthesizes selenophosphate from selenide and ATP. The polypeptide is Selenide, water dikinase (Shewanella sp. (strain MR-7)).